The following is a 118-amino-acid chain: MICOS complex subunit MIC13 (118 aa).

Topologically, residues 1-7 (MVPRVWS) are mitochondrial matrix. The chain crosses the membrane as a helical span at residues 8 to 26 (LMRFLIKGSVAGGAIYLVY). The Mitochondrial intermembrane segment spans residues 27–118 (DQDPLGPSDK…GWEYLKERTK (92 aa)).

The protein belongs to the MICOS complex subunit Mic13 family. As to quaternary structure, component of the mitochondrial contact site and cristae organizing system (MICOS) complex, composed of at least MICOS10/MIC10, CHCHD3/MIC19, CHCHD6/MIC25, APOO/MIC26, MICOS13/MIC13, APOOL/MIC27 and IMMT/MIC60. The MICOS complex associates with mitochondrial outer membrane proteins SAMM50, MTX1 and MTX2 (together described as components of the mitochondrial outer membrane sorting assembly machinery (SAM) complex) and DNAJC11, mitochondrial inner membrane protein TMEM11 and with HSPA9. The MICOS and SAM complexes together with DNAJC11 are part of a large protein complex spanning both membranes termed the mitochondrial intermembrane space bridging (MIB) complex.

It is found in the mitochondrion inner membrane. In terms of biological role, component of the MICOS complex, a large protein complex of the mitochondrial inner membrane that plays crucial roles in the maintenance of crista junctions, inner membrane architecture, and formation of contact sites to the outer membrane. Constituent of mature MICOS complex, it is required for the formation of cristae junction (CJ) and maintenance of cristae morphology. Required for the incorporation of MICOS10/MIC10 into the MICOS complex. The polypeptide is MICOS complex subunit MIC13 (Sus scrofa (Pig)).